Here is a 9702-residue protein sequence, read N- to C-terminus: Nonribosomal peptide synthetase ungA (9702 aa).

The adenylation 1 stretch occupies residues 248 to 647 (EQAQLRPHAP…ARKDTQVKIR (400 aa)). One can recognise a Carrier 1 domain in the interval 775–852 (APQTEMEYRL…MARAAQEKQT (78 aa)). Residue serine 812 is modified to O-(pantetheine 4'-phosphoryl)serine. Positions 891–1288 (DILPCTPLQE…EAVLRHVCSQ (398 aa)) are condensation 1. The adenylation 2 stretch occupies residues 1330–1730 (QRTQQQPDAP…GRKDTQVKIR (401 aa)). One can recognise a Carrier 2 domain in the interval 1857–1933 (LPQSPMEKSL…RLARREIQTD (77 aa)). Residue serine 1894 is modified to O-(pantetheine 4'-phosphoryl)serine. The segment at 1946 to 2374 (PFALSPIQQF…ERALEGTAVQ (429 aa)) is epimerization 1. Residues 2414–2842 (EDIYPCSPLQ…LDTAILSPQD (429 aa)) form a condensation 2 region. Residues 2868–3267 (QVERQPDALA…GRKDTQVKIR (400 aa)) form an adenylation 3 region. Residues 3397–3473 (APTTEMERHL…EMSQVAKLGS (77 aa)) enclose the Carrier 3 domain. An O-(pantetheine 4'-phosphoryl)serine modification is found at serine 3434. The tract at residues 3512–3920 (EDVFPCTPLQ…LLCDASHHQS (409 aa)) is condensation 3. The segment at 3957–4361 (KQTQRRSAAQ…GRKDAQVKIR (405 aa)) is adenylation 4. The Carrier 4 domain maps to 4491–4568 (PPTTDLERQI…LALSVSAAVD (78 aa)). At serine 4528 the chain carries O-(pantetheine 4'-phosphoryl)serine. The interval 4583-5013 (ALSPIQQMFA…QAAAQALPLL (431 aa)) is epimerization 2. Positions 5049 to 5474 (VEDIYPCSPL…ANIISHQDLE (426 aa)) are condensation 4. Positions 5496–5899 (MQQAESQPGA…GRKDNQVKIH (404 aa)) are adenylation 5. The Carrier 5 domain maps to 6033–6110 (TASSPEELEL…LVSHAQGNTA (78 aa)). At serine 6070 the chain carries O-(pantetheine 4'-phosphoryl)serine. The epimerization 3 stretch occupies residues 6127-6551 (ELSPIQQLFF…CKSSLEAAAA (425 aa)). The condensation 5 stretch occupies residues 6593–6935 (VEDIYPCAPI…TGISVQGGAA (343 aa)). The tract at residues 7047 to 7447 (KRPDAPAIDA…GRRDNQVKVR (401 aa)) is adenylation 6. Residues 7575-7655 (GPQTEVERLL…RSARTVQGHV (81 aa)) form the Carrier 6 domain. An O-(pantetheine 4'-phosphoryl)serine modification is found at serine 7613. Positions 7670–8106 (DLAPVQQMFA…LVTASELLMQ (437 aa)) are epimerization 4. The segment at 8144–8588 (VEDIYPCSPI…EVDLSTDHDQ (445 aa)) is condensation 6. Positions 8612–9025 (NTVQKQPHST…GRKDSQVKIR (414 aa)) are adenylation 7. The 79-residue stretch at 9158–9236 (SPTAPMERRL…LALLVREGDA (79 aa)) folds into the Carrier 7 domain. Serine 9196 is modified (O-(pantetheine 4'-phosphoryl)serine). Positions 9282-9629 (DVYPTTDLQN…DNLEHDPGTA (348 aa)) are condensation 7.

This sequence belongs to the NRP synthetase family.

Its pathway is secondary metabolite biosynthesis. Functionally, nonribosomal peptide synthetase; part of the gene cluster that mediates the biosynthesis of the unguisins, gamma-aminobutyric acid (GABA)-containing fungal cyclic heptapeptides with the amino acid sequence cyclo-(D-Ala1-D-Val2-L-Phe3-D-Val4-D-Ala5-D-Trp6-GABA7) for unguisin A and cyclo-(D-Ala1-D-Val2-L-Leu3-D-Val4-D-Ala5-D-Trp6-GABA7) for unguisin B. UngA is the main enzyme within the cluster which condenses the 7 residues using its respective 7 modules. The terminal condensation domain (Ct) is involved in cyclization with D-alanine and thereby releasing of unguisins A and B. The alanine racemase ungC provides D-alanine, which is then accepted by the first adenylation domain of ungA. Finally, the hydrolase ungD catalyzes the hydrolysis between the D-tryptophan and GABA residues of unguisins A and B to produce the corresponding linear peptides. This Aspergillus violaceofuscus (strain CBS 115571) protein is Nonribosomal peptide synthetase ungA.